The primary structure comprises 303 residues: Porphobilinogen deaminase (303 aa).

An S-(dipyrrolylmethanemethyl)cysteine modification is found at cysteine 241.

Belongs to the HMBS family. As to quaternary structure, monomer. The cofactor is dipyrromethane.

It catalyses the reaction 4 porphobilinogen + H2O = hydroxymethylbilane + 4 NH4(+). It participates in porphyrin-containing compound metabolism; protoporphyrin-IX biosynthesis; coproporphyrinogen-III from 5-aminolevulinate: step 2/4. The protein operates within porphyrin-containing compound metabolism; chlorophyll biosynthesis. Its function is as follows. Tetrapolymerization of the monopyrrole PBG into the hydroxymethylbilane pre-uroporphyrinogen in several discrete steps. This chain is Porphobilinogen deaminase, found in Roseiflexus castenholzii (strain DSM 13941 / HLO8).